Consider the following 150-residue polypeptide: 3-hydroxyacyl-[acyl-carrier-protein] dehydratase FabZ (150 aa).

Residue histidine 57 is part of the active site.

The protein belongs to the thioester dehydratase family. FabZ subfamily.

The protein resides in the cytoplasm. The catalysed reaction is a (3R)-hydroxyacyl-[ACP] = a (2E)-enoyl-[ACP] + H2O. Involved in unsaturated fatty acids biosynthesis. Catalyzes the dehydration of short chain beta-hydroxyacyl-ACPs and long chain saturated and unsaturated beta-hydroxyacyl-ACPs. In Mannheimia succiniciproducens (strain KCTC 0769BP / MBEL55E), this protein is 3-hydroxyacyl-[acyl-carrier-protein] dehydratase FabZ.